An 898-amino-acid chain; its full sequence is Pyruvate, phosphate dikinase (898 aa).

The tract at residues 1-355 (MAKWVYTFGA…LWMLQTRSGK (355 aa)) is N-terminal. An ATP-binding site is contributed by R96. The linker 1 stretch occupies residues 356–412 (RTAKSALKIAVDMAEEGLISKEEAVARIDPASLDQLLHPTIDPHARRDIIGSGLPAS). Residues 413-511 (PGAATGEIVF…TLRKGDVITI (99 aa)) form a central region. T466 is subject to Phosphothreonine; by PDRP1. Catalysis depends on H468, which acts as the Tele-phosphohistidine intermediate. The linker 2 stretch occupies residues 512–546 (DGSSGQVLKGEIPMLQPELSGDFGKIMQWADASRR). Positions 547-898 (MTVRTNAETP…VAEVQALAAS (352 aa)) are C-terminal. R574, R630, E758, G779, T780, N781, and D782 together coordinate substrate. A Mg(2+)-binding site is contributed by E758. Residue D782 coordinates Mg(2+). Residue C844 is the Proton donor of the active site.

The protein belongs to the PEP-utilizing enzyme family. Homodimer. It depends on Mg(2+) as a cofactor. Post-translationally, phosphorylation of Thr-466 in the dark inactivates the enzyme. Dephosphorylation upon light stimulation reactivates the enzyme.

It catalyses the reaction pyruvate + phosphate + ATP = phosphoenolpyruvate + AMP + diphosphate + H(+). Its activity is regulated as follows. Activated by light-induced dephosphorylation. Inhibited by dark-induced phosphorylation. Both reactions are catalyzed by PDRP1. Catalyzes the reversible phosphorylation of pyruvate and phosphate. In Rhizobium meliloti (strain 1021) (Ensifer meliloti), this protein is Pyruvate, phosphate dikinase (ppdK).